The sequence spans 119 residues: MSRVKRGVTNRAKHKKVLKAAKGYYGMRGSAFRIARQQVIKSGQYAYAHRRLRKREFRSLWIQRINAAARQHGLSYSRLMNGLQQAGIEVDRKQLADLAVHEPQSFAALAERAQGALSN.

It belongs to the bacterial ribosomal protein bL20 family.

Its function is as follows. Binds directly to 23S ribosomal RNA and is necessary for the in vitro assembly process of the 50S ribosomal subunit. It is not involved in the protein synthesizing functions of that subunit. The chain is Large ribosomal subunit protein bL20 from Halorhodospira halophila (strain DSM 244 / SL1) (Ectothiorhodospira halophila (strain DSM 244 / SL1)).